The sequence spans 329 residues: MKQPVFAVTSGEPAGIGPDICLDLAFARLPCRCAVLGDKNLLRARAEALGKSVVLRDFDPESGGAAYGELEVLHIPAVEAVEAGKLNPANAAYVLQLLDTALAGISDGIFDGIVTAPLHKGIINDARASTGFFSGHTEYLAEKSGTGQVVMMLAGKGLRVALVTTHLPLKDVAAAITQPLIESVARILHHDLKHKFGIKNPKILVAGLNPHAGEGGHLGHEETDTIIPALENLRREGINLAGPYPADTLFQPFMLEGADAVLAMYHDQGLPVLKYHSFGQGVNITLGLPFIRTSVDHGTALDLAATGRADSGSLITAVETAVEMARGSL.

2 residues coordinate substrate: His-136 and Thr-137. Residues His-166, His-211, and His-266 each coordinate a divalent metal cation. Substrate is bound by residues Lys-274, Asn-283, and Arg-292.

It belongs to the PdxA family. As to quaternary structure, homodimer. Zn(2+) is required as a cofactor. It depends on Mg(2+) as a cofactor. Requires Co(2+) as cofactor.

The protein resides in the cytoplasm. It carries out the reaction 4-(phosphooxy)-L-threonine + NAD(+) = 3-amino-2-oxopropyl phosphate + CO2 + NADH. It functions in the pathway cofactor biosynthesis; pyridoxine 5'-phosphate biosynthesis; pyridoxine 5'-phosphate from D-erythrose 4-phosphate: step 4/5. Functionally, catalyzes the NAD(P)-dependent oxidation of 4-(phosphooxy)-L-threonine (HTP) into 2-amino-3-oxo-4-(phosphooxy)butyric acid which spontaneously decarboxylates to form 3-amino-2-oxopropyl phosphate (AHAP). The sequence is that of 4-hydroxythreonine-4-phosphate dehydrogenase from Neisseria meningitidis serogroup B (strain ATCC BAA-335 / MC58).